We begin with the raw amino-acid sequence, 41 residues long: Large ribosomal subunit protein bL36 (41 aa).

It belongs to the bacterial ribosomal protein bL36 family.

This chain is Large ribosomal subunit protein bL36, found in Stenotrophomonas maltophilia (strain R551-3).